Reading from the N-terminus, the 400-residue chain is Imidazolonepropionase (400 aa).

The Fe(3+) site is built by His-68 and His-70. 2 residues coordinate Zn(2+): His-68 and His-70. 4-imidazolone-5-propanoate contacts are provided by Arg-77, Tyr-140, and His-173. N-formimidoyl-L-glutamate is bound at residue Tyr-140. His-238 contacts Fe(3+). His-238 is a binding site for Zn(2+). Gln-241 contributes to the 4-imidazolone-5-propanoate binding site. Asp-313 contacts Fe(3+). Residue Asp-313 participates in Zn(2+) binding. N-formimidoyl-L-glutamate-binding residues include Asn-315 and Gly-317. Thr-318 contacts 4-imidazolone-5-propanoate.

This sequence belongs to the metallo-dependent hydrolases superfamily. HutI family. The cofactor is Zn(2+). It depends on Fe(3+) as a cofactor.

Its subcellular location is the cytoplasm. The catalysed reaction is 4-imidazolone-5-propanoate + H2O = N-formimidoyl-L-glutamate. The protein operates within amino-acid degradation; L-histidine degradation into L-glutamate; N-formimidoyl-L-glutamate from L-histidine: step 3/3. Functionally, catalyzes the hydrolytic cleavage of the carbon-nitrogen bond in imidazolone-5-propanoate to yield N-formimidoyl-L-glutamate. It is the third step in the universal histidine degradation pathway. This Paracoccus denitrificans (strain Pd 1222) protein is Imidazolonepropionase.